Reading from the N-terminus, the 227-residue chain is 2,3-bisphosphoglycerate-dependent phosphoglycerate mutase (227 aa).

Residues 7–14 (RHGQSEWN), 20–21 (TG), R59, 86–89 (ERHY), K97, 113–114 (RR), and 182–183 (GN) contribute to the substrate site. Catalysis depends on H8, which acts as the Tele-phosphohistidine intermediate. Residue E86 is the Proton donor/acceptor of the active site.

It belongs to the phosphoglycerate mutase family. BPG-dependent PGAM subfamily. In terms of assembly, homodimer.

It carries out the reaction (2R)-2-phosphoglycerate = (2R)-3-phosphoglycerate. The protein operates within carbohydrate degradation; glycolysis; pyruvate from D-glyceraldehyde 3-phosphate: step 3/5. Functionally, catalyzes the interconversion of 2-phosphoglycerate and 3-phosphoglycerate. The sequence is that of 2,3-bisphosphoglycerate-dependent phosphoglycerate mutase from Neisseria meningitidis serogroup A / serotype 4A (strain DSM 15465 / Z2491).